Reading from the N-terminus, the 31-residue chain is Photosystem II reaction center protein T (31 aa).

A helical membrane pass occupies residues 3–23 (SFAYILILAFSIGTLFFAIAL).

It belongs to the PsbT family. PSII is composed of 1 copy each of membrane proteins PsbA, PsbB, PsbC, PsbD, PsbE, PsbF, PsbH, PsbI, PsbJ, PsbK, PsbL, PsbM, PsbT, PsbX, PsbY, PsbZ, Psb30/Ycf12, peripheral proteins PsbO, CyanoQ (PsbQ), PsbU, PsbV and a large number of cofactors. It forms dimeric complexes.

Its subcellular location is the cellular thylakoid membrane. Functionally, found at the monomer-monomer interface of the photosystem II (PS II) dimer, plays a role in assembly and dimerization of PSII. PSII is a light-driven water plastoquinone oxidoreductase, using light energy to abstract electrons from H(2)O, generating a proton gradient subsequently used for ATP formation. The protein is Photosystem II reaction center protein T of Synechococcus sp. (strain RCC307).